The following is a 915-amino-acid chain: Metabotropic glutamate receptor 7 (915 aa).

Residues 1-34 form the signal peptide; the sequence is MVQLRKLLRVLTLMKFPCCVLEVLLCALAAAARG. The Extracellular portion of the chain corresponds to 35–590; that stretch reads QEMYAPHSIR…IIKLEWHSPW (556 aa). Cysteine 67 and cysteine 109 are disulfide-bonded. Asparagine 98 carries N-linked (GlcNAc...) asparagine glycosylation. Residues serine 159, 180–182, tyrosine 230, and aspartate 314 each bind L-glutamate; that span reads AST. 7 cysteine pairs are disulfide-bonded: cysteine 249-cysteine 541, cysteine 374-cysteine 390, cysteine 430-cysteine 437, cysteine 523-cysteine 542, cysteine 527-cysteine 545, cysteine 548-cysteine 560, and cysteine 563-cysteine 576. Lysine 407 lines the L-glutamate pocket. 2 N-linked (GlcNAc...) asparagine glycosylation sites follow: asparagine 458 and asparagine 486. Asparagine 572 carries an N-linked (GlcNAc...) asparagine glycan. The helical transmembrane segment at 591–615 threads the bilayer; that stretch reads AVIPVFLAMLGIIATIFVMATFIRY. At 616–627 the chain is on the cytoplasmic side; the sequence is NDTPIVRASGRE. Residues 628–648 form a helical membrane-spanning segment; the sequence is LSYVLLTGIFLCYIITFLMIA. The Extracellular portion of the chain corresponds to 649 to 654; sequence KPDVAV. The chain crosses the membrane as a helical span at residues 655 to 675; the sequence is CSFRRVFLGLGMCISYAALLT. Residues 676-702 lie on the Cytoplasmic side of the membrane; sequence KTNRIYRIFEQGKKSVTAPRLISPTSQ. Residues 703–723 form a helical membrane-spanning segment; that stretch reads LAITSSLISVQLLGVFIWFGV. Over 724–753 the chain is Extracellular; it reads DPPNIIIDYDEHKTMNPEQARGVLKCDITD. Residues 754–775 form a helical membrane-spanning segment; the sequence is LQIICSLGYSILLMVTCTVYAI. Over 776–788 the chain is Cytoplasmic; the sequence is KTRGVPENFNEAK. Residues 789-810 traverse the membrane as a helical segment; the sequence is PIGFTMYTTCIVWLAFIPIFFG. At 811 to 825 the chain is on the extracellular side; that stretch reads TAQSAEKLYIQTTTL. Residues 826–850 traverse the membrane as a helical segment; that stretch reads TISMNLSASVALGMLYMPKVYIIIF. The Cytoplasmic portion of the chain corresponds to 851–915; the sequence is HPELNVQKRK…KYVSYNNLVI (65 aa). The interval 874–895 is disordered; it reads SRLSHKPSDRPNGEAKTELCEN. Basic and acidic residues predominate over residues 879–892; the sequence is KPSDRPNGEAKTEL. Serine 900 bears the Phosphoserine mark.

This sequence belongs to the G-protein coupled receptor 3 family. As to quaternary structure, homodimer. Interacts with PICK1. Post-translationally, N-glycosylated. As to expression, expressed in many areas of the brain, especially in the cerebral cortex, hippocampus, and cerebellum. Expression of GRM7 isoforms in non-neuronal tissues appears to be restricted to isoform 3 and isoform 4.

The protein resides in the cell membrane. Its function is as follows. G-protein coupled receptor activated by glutamate that regulates axon outgrowth through the MAPK-cAMP-PKA signaling pathway during neuronal development. Ligand binding causes a conformation change that triggers signaling via guanine nucleotide-binding proteins (G proteins) and modulates the activity of downstream effectors, such as adenylate cyclase that it inhibits. This Homo sapiens (Human) protein is Metabotropic glutamate receptor 7 (GRM7).